The following is a 277-amino-acid chain: Bifunctional protein FolD (277 aa).

Residues 164–166, Ser-189, and Thr-230 each bind NADP(+); that span reads GRS.

The protein belongs to the tetrahydrofolate dehydrogenase/cyclohydrolase family. In terms of assembly, homodimer.

It carries out the reaction (6R)-5,10-methylene-5,6,7,8-tetrahydrofolate + NADP(+) = (6R)-5,10-methenyltetrahydrofolate + NADPH. It catalyses the reaction (6R)-5,10-methenyltetrahydrofolate + H2O = (6R)-10-formyltetrahydrofolate + H(+). It participates in one-carbon metabolism; tetrahydrofolate interconversion. Catalyzes the oxidation of 5,10-methylenetetrahydrofolate to 5,10-methenyltetrahydrofolate and then the hydrolysis of 5,10-methenyltetrahydrofolate to 10-formyltetrahydrofolate. This is Bifunctional protein FolD from Clostridium perfringens (strain SM101 / Type A).